A 322-amino-acid chain; its full sequence is MRVPFNDKVWAGRSDDGEAGDTRRVFNQVTPFGSAVRVQHDAPVIVGFSSDEGVRRNQGRIGAAHAPMELRRVLAGLPAKTAMVALADAGDVVCDDGDLEAAQAELADVVSEVLAGGGRPLVLGGGHEVAWGTYSGLRLHQQREAENEATLLISRKLLIINFDAHFDLRQKRPANSGTPFDQIALDCAERGVPFNYACFGISDLSNTASLFAHAERLGVHYVFDVDMQETQLPQRLNELQKLLDAADDVYLTIDLDVLPAATAPGVSAPAALGVPLSVIEAMVLRVRASGKLRVADIAEYNPTLDQDRRTARVAARLAYRLL.

Mn(2+) contacts are provided by His127, Asp163, His165, Asp167, Asp254, and Asp256.

It belongs to the arginase family. Requires Mn(2+) as cofactor.

The enzyme catalyses N-formimidoyl-L-glutamate + H2O = formamide + L-glutamate. It participates in amino-acid degradation; L-histidine degradation into L-glutamate; L-glutamate from N-formimidoyl-L-glutamate (hydrolase route): step 1/1. Its function is as follows. Catalyzes the conversion of N-formimidoyl-L-glutamate to L-glutamate and formamide. This chain is Formimidoylglutamase, found in Paraburkholderia xenovorans (strain LB400).